Here is a 607-residue protein sequence, read N- to C-terminus: UvrABC system protein C (607 aa).

The 79-residue stretch at 16–94 folds into the GIY-YIG domain; that stretch reads GRPGVYRMFD…IKEWRPPYNI (79 aa). In terms of domain architecture, UVR spans 203–238; the sequence is NALSEELSASMEKASMALEFERAAELRDQISMLRRV.

The protein belongs to the UvrC family. As to quaternary structure, interacts with UvrB in an incision complex.

The protein resides in the cytoplasm. Functionally, the UvrABC repair system catalyzes the recognition and processing of DNA lesions. UvrC both incises the 5' and 3' sides of the lesion. The N-terminal half is responsible for the 3' incision and the C-terminal half is responsible for the 5' incision. The sequence is that of UvrABC system protein C from Ectopseudomonas mendocina (strain ymp) (Pseudomonas mendocina).